The chain runs to 129 residues: Large ribosomal subunit protein bL20 (129 aa).

Belongs to the bacterial ribosomal protein bL20 family.

Its function is as follows. Binds directly to 23S ribosomal RNA and is necessary for the in vitro assembly process of the 50S ribosomal subunit. It is not involved in the protein synthesizing functions of that subunit. The sequence is that of Large ribosomal subunit protein bL20 from Mycolicibacterium gilvum (strain PYR-GCK) (Mycobacterium gilvum (strain PYR-GCK)).